The chain runs to 356 residues: Protein-arginine kinase (356 aa).

Residues 24-256 (IIISSRVRVA…RQILAQEQAA (233 aa)) form the Phosphagen kinase C-terminal domain. Residues 27-31 (SSRVR), His93, Arg127, 178-182 (RASVM), and 209-214 (RGLYGE) contribute to the ATP site. An RDXXRA motif of the pArg binding pocket involved in allosteric regulation motif is present at residues 339-344 (RDIFRA).

The protein belongs to the ATP:guanido phosphotransferase family.

The catalysed reaction is L-arginyl-[protein] + ATP = N(omega)-phospho-L-arginyl-[protein] + ADP + H(+). Its activity is regulated as follows. Appears to be allosterically activated by the binding of pArg-containing polypeptides to the pArg-binding pocket localized in the C-terminal domain of McsB. Catalyzes the specific phosphorylation of arginine residues in proteins. In Pelotomaculum thermopropionicum (strain DSM 13744 / JCM 10971 / SI), this protein is Protein-arginine kinase.